We begin with the raw amino-acid sequence, 136 residues long: Large ribosomal subunit protein uL16 (136 aa).

It belongs to the universal ribosomal protein uL16 family. Part of the 50S ribosomal subunit.

Its function is as follows. Binds 23S rRNA and is also seen to make contacts with the A and possibly P site tRNAs. The chain is Large ribosomal subunit protein uL16 from Buchnera aphidicola subsp. Acyrthosiphon pisum (strain 5A).